Consider the following 188-residue polypeptide: Probable nicotinate-nucleotide adenylyltransferase (188 aa).

The protein belongs to the NadD family.

It catalyses the reaction nicotinate beta-D-ribonucleotide + ATP + H(+) = deamido-NAD(+) + diphosphate. It functions in the pathway cofactor biosynthesis; NAD(+) biosynthesis; deamido-NAD(+) from nicotinate D-ribonucleotide: step 1/1. Functionally, catalyzes the reversible adenylation of nicotinate mononucleotide (NaMN) to nicotinic acid adenine dinucleotide (NaAD). The protein is Probable nicotinate-nucleotide adenylyltransferase of Listeria welshimeri serovar 6b (strain ATCC 35897 / DSM 20650 / CCUG 15529 / CIP 8149 / NCTC 11857 / SLCC 5334 / V8).